A 517-amino-acid chain; its full sequence is Protein ERGIC-53 (517 aa).

An N-terminal signal peptide occupies residues Met1 to Ser30. Over Asp31–Ser484 the chain is Lumenal. The region spanning Arg52 to Leu275 is the L-type lectin-like domain. A carbohydrate contacts are provided by Ser96 and Asp129. Residues Asp160, Phe162, and Asn164 each coordinate Ca(2+). Residues Asn164 and His186 each coordinate a carbohydrate. A Ca(2+)-binding site is contributed by Asp189. A disulfide bridge connects residues Cys198 and Cys238. Gly259–Leu261 contacts a carbohydrate. Ser433 carries the post-translational modification Phosphoserine. Residues Thr485–Tyr505 traverse the membrane as a helical segment. The Cytoplasmic portion of the chain corresponds to Arg506 to Phe517. The tract at residues Arg506–Phe517 is mediates interaction with RAB3GAP1, RAB3GAP2 and UBXN6. Positions Phe516–Phe517 match the ER export motif motif.

Exists both as a covalent disulfide-linked homohexamer, and a complex of three disulfide-linked dimers non-covalently kept together. Interacts with MCFD2. May interact with TMEM115. Interacts with RAB3GAP1 and RAB3GAP2. Interacts with UBXN6. Interacts with SERPINA1/alpha1-antitrypsin. Interacts with BET1.

It is found in the endoplasmic reticulum-Golgi intermediate compartment membrane. The protein localises to the golgi apparatus membrane. Its subcellular location is the endoplasmic reticulum membrane. Its function is as follows. Mannose-specific lectin. May recognize sugar residues of glycoproteins, glycolipids, or glycosylphosphatidyl inositol anchors and may be involved in the sorting or recycling of proteins, lipids, or both. The LMAN1-MCFD2 complex forms a specific cargo receptor for the ER-to-Golgi transport of selected proteins. The chain is Protein ERGIC-53 (Lman1) from Mus musculus (Mouse).